The primary structure comprises 249 residues: 1-(5-phosphoribosyl)-5-[(5-phosphoribosylamino)methylideneamino] imidazole-4-carboxamide isomerase (249 aa).

The active-site Proton acceptor is the Asp-10. Asp-131 functions as the Proton donor in the catalytic mechanism.

This sequence belongs to the HisA/HisF family.

The protein resides in the cytoplasm. It carries out the reaction 1-(5-phospho-beta-D-ribosyl)-5-[(5-phospho-beta-D-ribosylamino)methylideneamino]imidazole-4-carboxamide = 5-[(5-phospho-1-deoxy-D-ribulos-1-ylimino)methylamino]-1-(5-phospho-beta-D-ribosyl)imidazole-4-carboxamide. The protein operates within amino-acid biosynthesis; L-histidine biosynthesis; L-histidine from 5-phospho-alpha-D-ribose 1-diphosphate: step 4/9. This Brevibacillus brevis (strain 47 / JCM 6285 / NBRC 100599) protein is 1-(5-phosphoribosyl)-5-[(5-phosphoribosylamino)methylideneamino] imidazole-4-carboxamide isomerase.